Consider the following 416-residue polypeptide: PRKCA-binding protein (416 aa).

Residues 22–105 (KVTLQKDAQN…EVTIHYNKLQ (84 aa)) enclose the PDZ domain. Zn(2+) is bound by residues cysteine 44 and cysteine 46. Phosphothreonine is present on threonine 82. Positions 144–357 (LCNDGLVKRL…CYAVLRDADV (214 aa)) constitute an AH domain. Positions 373-416 (PNQGGFTDGEDEEEEEEDGAAREVSKDARGATGPTDKGGSWCDS) are disordered. Positions 380–390 (DGEDEEEEEED) are enriched in acidic residues. Residues 391-401 (GAAREVSKDAR) show a composition bias toward basic and acidic residues. Residue cysteine 414 is the site of S-palmitoyl cysteine; by DHHC8 attachment.

Monomer and homodimer. Interacts with CXADR. Interacts presynaptically with the glutamate receptors GRIA2, GRIA3, GRIK3, isoform 3 of GRIA4, isoform A of GRM4, GRM7 and GRM8; with NAPA and NAPB; and with BTG2. The interaction with NAPA and NAPB disrupts the interaction with GRIA2, conducting to the internalization of GRIA2. Interacts with PRKCA; with the amine transporters SLC6A2 and SLC6A3; with the channels ASIC1 and ASIC2; with the GTP-binding proteins ARF1 and ARF3; with the ephrin receptor tyrosine kinases EPHA7, EPHB1 and EPHB2; with ERBB2 and through its PDZ domain with the C-terminal tail of PRLHR. Interacts with UNC5A. Interacts (via AH domain) with NCS1/FREQ; in a calcium-dependent manner. Interacts with F-actin and associates with the ARP2/3 complex. Interacts (via PDZ domain) with ARF1 (activated); the interaction blocks Arp2/3 complex inhibition. Interacts with SORCS3. In terms of processing, phosphorylation at Thr-82 appears to inhibit the interaction with AMPA receptors. Palmitoylation on Cys-414 is essential for long-term synaptic depression (LTD). In terms of tissue distribution, ubiquitous.

It localises to the cytoplasm. Its subcellular location is the perinuclear region. It is found in the membrane. The protein localises to the postsynaptic density. The protein resides in the synapse. It localises to the synaptosome. Its subcellular location is the cytoskeleton. Its function is as follows. Probable adapter protein that bind to and organize the subcellular localization of a variety of membrane proteins containing some PDZ recognition sequence. Involved in the clustering of various receptors, possibly by acting at the receptor internalization level. Plays a role in synaptic plasticity by regulating the trafficking and internalization of AMPA receptors. May be regulated upon PRKCA activation. May regulate ASIC1/ASIC3 channel. Regulates actin polymerization by inhibiting the actin-nucleating activity of the Arp2/3 complex; the function is competitive with nucleation promoting factors and is linked to neuronal morphology regulation and AMPA receptor (AMPAR) endocytosis. Via interaction with the Arp2/3 complex involved in regulation of synaptic plasicity of excitatory synapses and required for spine shrinkage during long-term depression (LTD). Involved in regulation of astrocyte morphology, antagonistic to Arp2/3 complex activator WASL/N-WASP function. This chain is PRKCA-binding protein (Pick1), found in Rattus norvegicus (Rat).